Here is a 165-residue protein sequence, read N- to C-terminus: MIDADGYRPNVGIIIVNKEGKLFWGKRLYQDAWQFPQGGVRENETPQQAVFRELKEEVGLEPSDVRVLGRTKDWLTYDLPKHLIRHYSQPVCIGQKQIWFLLGMLSDDEKINLNTHETPEFEGWSWVDYWVPVQNVVEFKQSVYHQALTELETHLHKFWTKEHVG.

Positions 6–149 (GYRPNVGIII…KQSVYHQALT (144 aa)) constitute a Nudix hydrolase domain. The Nudix box signature appears at 38-59 (GGVRENETPQQAVFRELKEEVG).

The protein belongs to the Nudix hydrolase family. RppH subfamily. It depends on a divalent metal cation as a cofactor.

Its function is as follows. Accelerates the degradation of transcripts by removing pyrophosphate from the 5'-end of triphosphorylated RNA, leading to a more labile monophosphorylated state that can stimulate subsequent ribonuclease cleavage. This is RNA pyrophosphohydrolase from Hydrogenovibrio crunogenus (strain DSM 25203 / XCL-2) (Thiomicrospira crunogena).